Here is a 91-residue protein sequence, read N- to C-terminus: Probable translocation protein y4yM (91 aa).

A run of 2 helical transmembrane segments spans residues 15–35 (VVFMIWILPPLIASVIVGLTI) and 55–75 (LLVVVAVIGLFAPVLSAPLIE).

The protein belongs to the FliQ/MopD/SpaQ family.

Its subcellular location is the cell membrane. Functionally, could be involved in the secretion of an unknown factor. This is Probable translocation protein y4yM from Sinorhizobium fredii (strain NBRC 101917 / NGR234).